The primary structure comprises 1115 residues: G-protein coupled receptor GRL101 (1115 aa).

Positions 1 to 24 (MATMSGTTIVCLIYLTTMLGNSQG) are cleaved as a signal peptide. Residues 25 to 767 (VNLKIESPSP…SCEDLMSNHV (743 aa)) lie on the Extracellular side of the membrane. LDL-receptor class A domains follow at residues 36–79 (TLCS…TCGC), 77–115 (CGCL…ECDI), 116–155 (YICP…ICER), 156–196 (RECV…ACDS), 195–232 (DSDK…NCKL), 231–269 (KLCD…VCAN), 272–318 (YGCP…YCSN), 320–363 (SECK…SCLA), 365–403 (PKCS…NCEN), 404–442 (HQCA…DCDP), 444–485 (PVCE…NCSQ), and 486–525 (HICL…NCRY). 16 disulfides stabilise this stretch: Cys38/Cys53, Cys46/Cys66, Cys60/Cys77, Cys79/Cys91, Cys86/Cys104, Cys98/Cys113, Cys118/Cys131, Cys138/Cys153, Cys158/Cys170, Cys165/Cys183, Cys177/Cys194, Cys202/Cys220, Cys214/Cys230, Cys233/Cys245, Cys240/Cys258, and Cys252/Cys267. Asn87 carries an N-linked (GlcNAc...) asparagine glycan. Asn166 is a glycosylation site (N-linked (GlcNAc...) asparagine). The N-linked (GlcNAc...) asparagine glycan is linked to Asn269. 3 disulfide bridges follow: Cys274–Cys291, Cys282–Cys304, and Cys298–Cys316. Asn318 carries an N-linked (GlcNAc...) asparagine glycan. Intrachain disulfides connect Cys322–Cys339, Cys334–Cys352, Cys346–Cys361, Cys367–Cys379, Cys374–Cys392, Cys386–Cys401, Cys406–Cys418, Cys413–Cys431, Cys425–Cys440, Cys446–Cys458, Cys453–Cys474, Cys465–Cys483, Cys488–Cys500, Cys495–Cys513, and Cys507–Cys523. A glycan (N-linked (GlcNAc...) asparagine) is linked at Asn482. Asn502 carries N-linked (GlcNAc...) asparagine glycosylation. Residues 518–562 (WDENNCRYWCPHGQAICQCEGVTMDCTGQKLKEMPVQQMEEDLSK) enclose the LRRNT domain. An N-linked (GlcNAc...) asparagine glycan is attached at Asn571. 6 LRR repeats span residues 584–605 (KVTY…SFQN), 608–629 (KLTH…SLLG), 632–653 (NLKQ…TFSS), 656–677 (HLTV…MFKG), 680–701 (QITV…AFNN), and 704–725 (NVRL…VFMG). N-linked (GlcNAc...) asparagine glycans are attached at residues Asn618 and Asn624. N-linked (GlcNAc...) asparagine glycosylation occurs at Asn685. Residues 768–788 (LRVSIWVLGVIALVGNFVVIF) form a helical membrane-spanning segment. Residues 789–801 (WRVRDFRGGKVHS) lie on the Cytoplasmic side of the membrane. Residues 802 to 822 (FLITNLAIGDFLMGVYLLIIA) traverse the membrane as a helical segment. Topologically, residues 823–857 (TADTYYRGVYISHDENWKQSGLCQFAGFVSTFSSE) are extracellular. The chain crosses the membrane as a helical span at residues 858–878 (LSVLTLSTITLDRLICILFPL). Topologically, residues 879 to 887 (RRTRLGLRQ) are cytoplasmic. The chain crosses the membrane as a helical span at residues 888-908 (AIIVMSCIWVLVFLLAVLPLL). The Extracellular portion of the chain corresponds to 909-941 (GFSYFENFYGRSGVCLALHVTPDRRPGWEYSVG). Residues 942–962 (VFILLNLLSFVLIASSYLWMF) traverse the membrane as a helical segment. At 963 to 988 (SVAKKTRSAVRTAESKNDNAMARRMT) the chain is on the cytoplasmic side. Residues 989–1009 (LIVMTDFCCWVPIIVLGFVSL) traverse the membrane as a helical segment. At 1010–1017 (AGARADDQ) the chain is on the extracellular side. The chain crosses the membrane as a helical span at residues 1018-1038 (VYAWIAVFVLPLNSATNPVIY). At 1039-1115 (TLSTAPFLGN…YYNTELHSDS (77 aa)) the chain is on the cytoplasmic side.

This sequence belongs to the G-protein coupled receptor 1 family. In terms of tissue distribution, predominantly expressed in a small number of neurons within the central nervous system and to a lesser extent in the heart.

It is found in the cell membrane. Functionally, might directly transduce signals carried by large extracellular lipoprotein complexes into neuronal events. The sequence is that of G-protein coupled receptor GRL101 from Lymnaea stagnalis (Great pond snail).